Reading from the N-terminus, the 375-residue chain is Arabinose metabolism transcriptional repressor (375 aa).

Positions 1-70 (METKYNFVKQ…QGAGTFCADR (70 aa)) constitute an HTH gntR-type domain. Residues 30–49 (ENELMKEYNVSRHTVRKAID) constitute a DNA-binding region (H-T-H motif).

It localises to the cytoplasm. In terms of biological role, transcriptional repressor of the arabinose utilization genes. This chain is Arabinose metabolism transcriptional repressor (araR), found in Halalkalibacterium halodurans (strain ATCC BAA-125 / DSM 18197 / FERM 7344 / JCM 9153 / C-125) (Bacillus halodurans).